A 91-amino-acid polypeptide reads, in one-letter code: Signal recognition particle 19 kDa protein (91 aa).

It belongs to the SRP19 family. Part of the signal recognition particle protein translocation system, which is composed of SRP and FtsY. Archaeal SRP consists of a 7S RNA molecule of 300 nucleotides and two protein subunits: SRP54 and SRP19.

The protein resides in the cytoplasm. Its function is as follows. Involved in targeting and insertion of nascent membrane proteins into the cytoplasmic membrane. Binds directly to 7S RNA and mediates binding of the 54 kDa subunit of the SRP. The polypeptide is Signal recognition particle 19 kDa protein (Methanoregula boonei (strain DSM 21154 / JCM 14090 / 6A8)).